The following is a 391-amino-acid chain: Casein kinase II subunit alpha (391 aa).

The tract at residues 36 to 41 (QDDYQL) is interaction with beta subunit. One can recognise a Protein kinase domain in the interval 39–324 (YQLVRKLGRG…AREAMEHPYF (286 aa)). ATP contacts are provided by residues 45–53 (LGRGKYSEV) and K68. The active-site Proton acceptor is D156. Phosphothreonine; by CDK1 is present on residues T344 and T360. Phosphoserine; by CDK1 occurs at positions 362 and 370.

Belongs to the protein kinase superfamily. Ser/Thr protein kinase family. CK2 subfamily. In terms of assembly, heterotetramer composed of two catalytic subunits (alpha chain and/or alpha' chain) and two regulatory subunits (beta chains). The tetramer can exist as a combination of 2 alpha/2 beta, 2 alpha'/2 beta or 1 alpha/1 alpha'/2 beta subunits. Also part of a CK2-SPT16-SSRP1 complex composed of SSRP1, SUPT16H, CSNK2A1, CSNK2A2 and CSNK2B, which forms following UV irradiation. Interacts with RNPS1. Interacts with SNAI1. Interacts with PML. Interacts with CCAR2. Interacts with HIRIP3. Phosphorylated at Thr-344, Thr-360, Ser-362 and Ser-370 by CDK1 in prophase and metaphase and dephosphorylated during anaphase. Phosphorylation does not directly affect casein kinase 2 activity, but may contribute to its regulation by forming binding sites for interacting proteins and/or targeting it to different compartments.

Its subcellular location is the nucleus. It carries out the reaction L-seryl-[protein] + ATP = O-phospho-L-seryl-[protein] + ADP + H(+). The catalysed reaction is L-threonyl-[protein] + ATP = O-phospho-L-threonyl-[protein] + ADP + H(+). With respect to regulation, constitutively active protein kinase whose activity is not directly affected by phosphorylation. Seems to be regulated by level of expression and localization. Functionally, catalytic subunit of a constitutively active serine/threonine-protein kinase complex that phosphorylates a large number of substrates containing acidic residues C-terminal to the phosphorylated serine or threonine. Regulates numerous cellular processes, such as cell cycle progression, apoptosis and transcription, as well as viral infection. May act as a regulatory node which integrates and coordinates numerous signals leading to an appropriate cellular response. During mitosis, functions as a component of the p53/TP53-dependent spindle assembly checkpoint (SAC) that maintains cyclin-B-CDK1 activity and G2 arrest in response to spindle damage. Also required for p53/TP53-mediated apoptosis, phosphorylating 'Ser-392' of p53/TP53 following UV irradiation. Phosphorylates a number of DNA repair proteins in response to DNA damage, such as MDC1, MRE11, RAD9A, RAD51 and HTATSF1, promoting their recruitment to DNA damage sites. Can also negatively regulate apoptosis. Phosphorylates the caspases CASP9 and CASP2 and the apoptotic regulator NOL3. Phosphorylation protects CASP9 from cleavage and activation by CASP8, and inhibits the dimerization of CASP2 and activation of CASP8. Phosphorylates YY1, protecting YY1 from cleavage by CASP7 during apoptosis. Regulates transcription by direct phosphorylation of RNA polymerases I, II, III and IV. Also phosphorylates and regulates numerous transcription factors including NF-kappa-B, STAT1, CREB1, IRF1, IRF2, ATF1, ATF4, SRF, MAX, JUN, FOS, MYC and MYB. Phosphorylates Hsp90 and its co-chaperones FKBP4 and CDC37, which is essential for chaperone function. Mediates sequential phosphorylation of FNIP1, promoting its gradual interaction with Hsp90, leading to activate both kinase and non-kinase client proteins of Hsp90. Regulates Wnt signaling by phosphorylating CTNNB1 and the transcription factor LEF1. Acts as an ectokinase that phosphorylates several extracellular proteins. Phosphorylates PML at 'Ser-565' and primes it for ubiquitin-mediated degradation. Plays an important role in the circadian clock function by phosphorylating BMAL1 at 'Ser-90' which is pivotal for its interaction with CLOCK and which controls CLOCK nuclear entry. Phosphorylates FMR1, promoting FMR1-dependent formation of a membraneless compartment. May phosphorylate histone H2A on 'Ser-1'. This Mus musculus (Mouse) protein is Casein kinase II subunit alpha (Csnk2a1).